Consider the following 115-residue polypeptide: Biotrophy-associated secreted protein 1 (115 aa).

An N-terminal signal peptide occupies residues 1–22; the sequence is MHVFNFAALFTVLATFTATAAA. The disordered stretch occupies residues 24–115; it reads DQGSNTFDQR…GIRRVENYYP (92 aa). Basic and acidic residues-rich tracts occupy residues 46–55 and 91–115; these read IREEKQENVG and QQKE…NYYP.

The protein resides in the secreted. Its subcellular location is the host cytoplasm. Secreted effector involved in biotrophic colonization of plant cells. Induces an early, basal defense response in susceptible rice, including rapid callose deposition and ROS production in leaves and calli. Also promotes sporulation and mycelia growth suggesting a role across the whole process of interaction, from the biotrophic phase to sporulation. This Pyricularia oryzae (strain 70-15 / ATCC MYA-4617 / FGSC 8958) (Rice blast fungus) protein is Biotrophy-associated secreted protein 1.